A 93-amino-acid chain; its full sequence is MRTLILLAAILLAALQAQAELFSVNVDEVLDQQQPGSDQDLVIHLTGEESSALQVPDTKGICACRRRFCPNSERFSGYCRVNGARYVRCCSRR.

The first 19 residues, 1–19 (MRTLILLAAILLAALQAQA), serve as a signal peptide directing secretion. The propeptide occupies 20-59 (ELFSVNVDEVLDQQQPGSDQDLVIHLTGEESSALQVPDTK). 3 disulfides stabilise this stretch: cysteine 62-cysteine 90, cysteine 64-cysteine 79, and cysteine 69-cysteine 89.

This sequence belongs to the alpha-defensin family.

It is found in the secreted. Its function is as follows. Microbicidal activity and inhibits corticotropin (ACTH) stimulated corticosterone production. The sequence is that of Corticostatin 1 from Oryctolagus cuniculus (Rabbit).